A 413-amino-acid polypeptide reads, in one-letter code: Putative adhesin P1-like protein MPN_144 (413 aa).

Composition is skewed to polar residues over residues 1-13 (MGQQ…SAGN), 25-54 (SGDS…NLTP), and 355-376 (SFGT…VFGT). 2 disordered regions span residues 1 to 60 (MGQQ…DWPN) and 355 to 413 (SFGT…VSGH). The segment covering 385–399 (LSGGGAGGGSSGSGQ) has biased composition (gly residues).

It belongs to the adhesin P1 family.

This is Putative adhesin P1-like protein MPN_144 from Mycoplasma pneumoniae (strain ATCC 29342 / M129 / Subtype 1) (Mycoplasmoides pneumoniae).